A 726-amino-acid polypeptide reads, in one-letter code: 1,4-alpha-glucan branching enzyme GlgB (726 aa).

Catalysis depends on aspartate 407, which acts as the Nucleophile. Glutamate 460 functions as the Proton donor in the catalytic mechanism.

The protein belongs to the glycosyl hydrolase 13 family. GlgB subfamily. Monomer.

The enzyme catalyses Transfers a segment of a (1-&gt;4)-alpha-D-glucan chain to a primary hydroxy group in a similar glucan chain.. It participates in glycan biosynthesis; glycogen biosynthesis. Catalyzes the formation of the alpha-1,6-glucosidic linkages in glycogen by scission of a 1,4-alpha-linked oligosaccharide from growing alpha-1,4-glucan chains and the subsequent attachment of the oligosaccharide to the alpha-1,6 position. In Hydrogenovibrio crunogenus (strain DSM 25203 / XCL-2) (Thiomicrospira crunogena), this protein is 1,4-alpha-glucan branching enzyme GlgB.